Here is a 543-residue protein sequence, read N- to C-terminus: Type I restriction enzyme MpnII methylase subunit (543 aa).

S-adenosyl-L-methionine is bound by residues 208-213, 240-242, and glutamate 265; these read EFFTPQ and SGS.

It belongs to the N(4)/N(6)-methyltransferase family. The methyltransferase is composed of M and S polypeptides.

It carries out the reaction a 2'-deoxyadenosine in DNA + S-adenosyl-L-methionine = an N(6)-methyl-2'-deoxyadenosine in DNA + S-adenosyl-L-homocysteine + H(+). Its function is as follows. The subtype gamma methyltransferase (M) subunit of a type I restriction enzyme. The M and S subunits together form a methyltransferase (MTase) that probably methylates A-2 on the top strand and A-3 on the bottom strand of the sequence 5'-GAN(7)TAY-3'. As the bacterial DNA is methylated on this sequence and this is the only type I methylase in the genome, it is probably responsible for all of the methylation on this site in the genome. The R subunit has multiple frameshifts and is probably not expressed in this bacteria. In Mycoplasma pneumoniae (strain ATCC 29342 / M129 / Subtype 1) (Mycoplasmoides pneumoniae), this protein is Type I restriction enzyme MpnII methylase subunit.